A 347-amino-acid polypeptide reads, in one-letter code: 5-deoxyribose 1-phosphate isomerase (347 aa).

Residues 48–50 (RGA), Arg91, and Gln198 each bind substrate. Residue Asp239 is the Proton donor of the active site. 249 to 250 (NK) is a substrate binding site.

This sequence belongs to the EIF-2B alpha/beta/delta subunits family. DrdI subfamily.

The enzyme catalyses 5-deoxy-alpha-D-ribose 1-phosphate = 5-deoxy-D-ribulose 1-phosphate. The protein operates within carbohydrate degradation. Its function is as follows. Catalyzes the isomerization of 5-deoxy-alpha-D-ribose 1-phosphate to 5-deoxy-D-ribulose 1-phosphate, as part of a 5-deoxyribose salvage pathway that recycles this toxic radical SAM enzyme by-product to mainstream metabolites. The polypeptide is 5-deoxyribose 1-phosphate isomerase (Bacillus thuringiensis (strain Al Hakam)).